The sequence spans 598 residues: Elongation factor 4 (598 aa).

A tr-type G domain is found at 2 to 184 (KNIRNFSIIA…EIVHKIPAPE (183 aa)). GTP is bound by residues 14 to 19 (DHGKST) and 131 to 134 (NKID).

This sequence belongs to the TRAFAC class translation factor GTPase superfamily. Classic translation factor GTPase family. LepA subfamily.

It is found in the cell inner membrane. It carries out the reaction GTP + H2O = GDP + phosphate + H(+). Its function is as follows. Required for accurate and efficient protein synthesis under certain stress conditions. May act as a fidelity factor of the translation reaction, by catalyzing a one-codon backward translocation of tRNAs on improperly translocated ribosomes. Back-translocation proceeds from a post-translocation (POST) complex to a pre-translocation (PRE) complex, thus giving elongation factor G a second chance to translocate the tRNAs correctly. Binds to ribosomes in a GTP-dependent manner. This is Elongation factor 4 from Pasteurella multocida (strain Pm70).